The sequence spans 541 residues: Membrane protein insertase YidC (541 aa).

5 helical membrane passes run 7 to 27, 346 to 368, 416 to 436, 454 to 474, and 495 to 515; these read LLVIALLFISFLVYQQWQLDY, IVQNWGLAIIGVTLVVKAILYPL, LGGCLPILLQMPIFIALYWTF, LSAQDPYYILPILMGASMFLL, and PLIFMVFFLWFPSGLVLYWLV.

Belongs to the OXA1/ALB3/YidC family. Type 1 subfamily. Interacts with the Sec translocase complex via SecD. Specifically interacts with transmembrane segments of nascent integral membrane proteins during membrane integration.

The protein resides in the cell inner membrane. Its function is as follows. Required for the insertion and/or proper folding and/or complex formation of integral membrane proteins into the membrane. Involved in integration of membrane proteins that insert both dependently and independently of the Sec translocase complex, as well as at least some lipoproteins. Aids folding of multispanning membrane proteins. This is Membrane protein insertase YidC from Pasteurella multocida (strain Pm70).